The following is a 508-amino-acid chain: Photosystem II CP47 reaction center protein (508 aa).

6 consecutive transmembrane segments (helical) span residues 21 to 36 (SVHIMHTALVAGWAGS), 101 to 115 (IVFSGLCFLAAIWHW), 140 to 156 (GIHLFLSGVACFGFGAF), 203 to 218 (IAAGTLGILAGLFHLS), 237 to 252 (VLSSSIAAVFFAAFVV), and 457 to 472 (SFALLFFFGHIWHGSR).

It belongs to the PsbB/PsbC family. PsbB subfamily. PSII is composed of 1 copy each of membrane proteins PsbA, PsbB, PsbC, PsbD, PsbE, PsbF, PsbH, PsbI, PsbJ, PsbK, PsbL, PsbM, PsbT, PsbX, PsbY, PsbZ, Psb30/Ycf12, at least 3 peripheral proteins of the oxygen-evolving complex and a large number of cofactors. It forms dimeric complexes. It depends on Binds multiple chlorophylls. PSII binds additional chlorophylls, carotenoids and specific lipids. as a cofactor.

It is found in the plastid. It localises to the chloroplast thylakoid membrane. In terms of biological role, one of the components of the core complex of photosystem II (PSII). It binds chlorophyll and helps catalyze the primary light-induced photochemical processes of PSII. PSII is a light-driven water:plastoquinone oxidoreductase, using light energy to abstract electrons from H(2)O, generating O(2) and a proton gradient subsequently used for ATP formation. The sequence is that of Photosystem II CP47 reaction center protein from Draba nemorosa (Woodland whitlowgrass).